The primary structure comprises 110 residues: Waprin-Thr1 (110 aa).

The signal sequence occupies residues 1–20 (MYKKGTILVLAYLLIATAVC). The 47-residue stretch at 22–68 (LSYKEGHCPLRNSVSKCIPRCVSDYQCSFNEKCCPNKCGSESCVQAS) folds into the WAP domain. 4 disulfide bridges follow: Cys-29–Cys-55, Cys-38–Cys-59, Cys-42–Cys-54, and Cys-48–Cys-64.

It belongs to the venom waprin family. Cys-rich waprin subfamily. In terms of tissue distribution, expressed by the venom gland.

The protein localises to the secreted. In terms of biological role, antimicrobial peptides with activity against Gram-positive and Gram-negative bacteria as well as fungi. Recognizes carbohydrates in the microbial cell walls, and induces structural damage to them. Also inhibits microbial serine proteases subtilisin A and proteinase K, as well as human and porcine elastases. Carbohydrates that are recognized are LPS, mannan, peptidoglycan, and N-acetl-D-glucosamine. The chain is Waprin-Thr1 from Apis mellifera (Honeybee).